The sequence spans 304 residues: UDP-3-O-acyl-N-acetylglucosamine deacetylase (304 aa).

Positions 79, 238, and 242 each coordinate Zn(2+). His-265 acts as the Proton donor in catalysis.

It belongs to the LpxC family. It depends on Zn(2+) as a cofactor.

The catalysed reaction is a UDP-3-O-[(3R)-3-hydroxyacyl]-N-acetyl-alpha-D-glucosamine + H2O = a UDP-3-O-[(3R)-3-hydroxyacyl]-alpha-D-glucosamine + acetate. It functions in the pathway glycolipid biosynthesis; lipid IV(A) biosynthesis; lipid IV(A) from (3R)-3-hydroxytetradecanoyl-[acyl-carrier-protein] and UDP-N-acetyl-alpha-D-glucosamine: step 2/6. In terms of biological role, catalyzes the hydrolysis of UDP-3-O-myristoyl-N-acetylglucosamine to form UDP-3-O-myristoylglucosamine and acetate, the committed step in lipid A biosynthesis. This chain is UDP-3-O-acyl-N-acetylglucosamine deacetylase, found in Chromobacterium violaceum (strain ATCC 12472 / DSM 30191 / JCM 1249 / CCUG 213 / NBRC 12614 / NCIMB 9131 / NCTC 9757 / MK).